The following is a 152-amino-acid chain: Superoxide dismutase [Cu-Zn] 4A (152 aa).

Histidine 45, histidine 47, and histidine 62 together coordinate Cu cation. Cysteine 56 and cysteine 145 form a disulfide bridge. Positions 62, 70, 79, and 82 each coordinate Zn(2+). Histidine 119 contributes to the Cu cation binding site.

The protein belongs to the Cu-Zn superoxide dismutase family. Homodimer. Requires Cu cation as cofactor. It depends on Zn(2+) as a cofactor.

It is found in the cytoplasm. The enzyme catalyses 2 superoxide + 2 H(+) = H2O2 + O2. In terms of biological role, destroys radicals which are normally produced within the cells and which are toxic to biological systems. The chain is Superoxide dismutase [Cu-Zn] 4A (SODCC.3) from Zea mays (Maize).